The following is a 116-amino-acid chain: UPF0329 protein ECU05_1650 (116 aa).

This sequence belongs to the UPF0329 family.

In Encephalitozoon cuniculi (strain GB-M1) (Microsporidian parasite), this protein is UPF0329 protein ECU05_1650.